A 189-amino-acid polypeptide reads, in one-letter code: Pyridoxal 5'-phosphate synthase subunit PdxT (189 aa).

Residue 47-49 coordinates L-glutamine; sequence GES. Catalysis depends on Cys79, which acts as the Nucleophile. L-glutamine is bound by residues Arg106 and 135–136; that span reads IR. Active-site charge relay system residues include His171 and Glu173.

It belongs to the glutaminase PdxT/SNO family. In terms of assembly, in the presence of PdxS, forms a dodecamer of heterodimers. Only shows activity in the heterodimer.

The catalysed reaction is aldehydo-D-ribose 5-phosphate + D-glyceraldehyde 3-phosphate + L-glutamine = pyridoxal 5'-phosphate + L-glutamate + phosphate + 3 H2O + H(+). It carries out the reaction L-glutamine + H2O = L-glutamate + NH4(+). The protein operates within cofactor biosynthesis; pyridoxal 5'-phosphate biosynthesis. Functionally, catalyzes the hydrolysis of glutamine to glutamate and ammonia as part of the biosynthesis of pyridoxal 5'-phosphate. The resulting ammonia molecule is channeled to the active site of PdxS. The protein is Pyridoxal 5'-phosphate synthase subunit PdxT of Desulforudis audaxviator (strain MP104C).